A 194-amino-acid chain; its full sequence is dTTP/UTP pyrophosphatase (194 aa).

Asp69 serves as the catalytic Proton acceptor.

This sequence belongs to the Maf family. YhdE subfamily. It depends on a divalent metal cation as a cofactor.

The protein resides in the cytoplasm. The enzyme catalyses dTTP + H2O = dTMP + diphosphate + H(+). It catalyses the reaction UTP + H2O = UMP + diphosphate + H(+). In terms of biological role, nucleoside triphosphate pyrophosphatase that hydrolyzes dTTP and UTP. May have a dual role in cell division arrest and in preventing the incorporation of modified nucleotides into cellular nucleic acids. The protein is dTTP/UTP pyrophosphatase of Moorella thermoacetica (strain ATCC 39073 / JCM 9320).